Reading from the N-terminus, the 510-residue chain is Portal protein (510 aa).

This sequence belongs to the podoviridae head-to-tail connector protein family. As to quaternary structure, homododecamer.

The protein localises to the virion. Its function is as follows. Forms the portal vertex of the capsid. This portal plays critical roles in head assembly, genome packaging, neck/tail attachment, and genome ejection. The portal protein multimerizes as a single ring-shaped homododecamer arranged around a central channel. This chain is Portal protein, found in Pseudomonas phage phiKMV.